Here is a 91-residue protein sequence, read N- to C-terminus: Small ribosomal subunit protein uS19 (91 aa).

The protein belongs to the universal ribosomal protein uS19 family.

Protein S19 forms a complex with S13 that binds strongly to the 16S ribosomal RNA. In Psychrobacter arcticus (strain DSM 17307 / VKM B-2377 / 273-4), this protein is Small ribosomal subunit protein uS19.